Reading from the N-terminus, the 476-residue chain is Probable protein S-acyltransferase 5 (476 aa).

The span at 1–11 shows a compositional bias: basic and acidic residues; sequence MLDLQPSDRRH. The tract at residues 1–21 is disordered; that stretch reads MLDLQPSDRRHGAPSSSGGVS. 2 consecutive transmembrane segments (helical) span residues 53–73 and 85–105; these read SILITVFLITAPVIVFCIFVG and GVSVLAVAVGLILLDLVFLLL. Positions 119-138 are disordered; it reads YPPEPESNEGNGEPRLAHTP. The DHHC domain occupies 158–208; sequence KYCDTCMLYRPPRASHCSICNNCVEKFDHHCPWLGQCIGLRNYRFYFMFVL. The active-site S-palmitoyl cysteine intermediate is the Cys188. 2 consecutive transmembrane segments (helical) span residues 209–223 and 246–266; these read CSTLLCIYVHVFCWI and SIALIIYTFICVWFVGGLTCF. 2 disordered regions span residues 320 to 340 and 373 to 454; these read SKEPAIPPRTVNGGMSSPSLQ and VASR…ASRD. Phosphoserine is present on Ser336. Residues 387–412 are compositionally biased toward basic and acidic residues; sequence SEGRGIMHSRESSRGRGIMHSRESSR. At Ser418 the chain carries Phosphoserine. The span at 425 to 441 shows a compositional bias: basic and acidic residues; that stretch reads VNEDLRTRDESVSRVGE.

It belongs to the DHHC palmitoyltransferase family.

The protein resides in the cell membrane. The catalysed reaction is L-cysteinyl-[protein] + hexadecanoyl-CoA = S-hexadecanoyl-L-cysteinyl-[protein] + CoA. Palmitoyl acyltransferase. The polypeptide is Probable protein S-acyltransferase 5 (PAT05) (Arabidopsis thaliana (Mouse-ear cress)).